We begin with the raw amino-acid sequence, 277 residues long: Large ribosomal subunit protein uL2 (277 aa).

The tract at residues 222-277 is disordered; the sequence is GVAMNPVDHPHGGGEGRTSGGRHPVTPWGKPTKGKKTRSNKATDKFIMRSRHQRKK.

Belongs to the universal ribosomal protein uL2 family. Part of the 50S ribosomal subunit. Forms a bridge to the 30S subunit in the 70S ribosome.

Functionally, one of the primary rRNA binding proteins. Required for association of the 30S and 50S subunits to form the 70S ribosome, for tRNA binding and peptide bond formation. It has been suggested to have peptidyltransferase activity; this is somewhat controversial. Makes several contacts with the 16S rRNA in the 70S ribosome. In Brucella melitensis biotype 1 (strain ATCC 23456 / CCUG 17765 / NCTC 10094 / 16M), this protein is Large ribosomal subunit protein uL2.